Here is a 979-residue protein sequence, read N- to C-terminus: Receptor-type tyrosine-protein phosphatase-like N (979 aa).

The N-terminal stretch at 1–34 is a signal peptide; the sequence is MRRPRRPGGLGGSGGLRLLLCLLLLSSRPGGCSA. The interval 35-131 is RESP18 homology domain; that stretch reads VSAHGCLFDR…RPRDRSGLAP (97 aa). The Lumenal portion of the chain corresponds to 35 to 575; that stretch reads VSAHGCLFDR…QTAHSTSPMR (541 aa). Cys53 and Cys62 are disulfide-bonded. Composition is skewed to basic and acidic residues over residues 112–127 and 304–323; these read RIPR…RDRS and RAED…RGEK. 3 disordered regions span residues 112-173, 289-329, and 393-439; these read RIPR…SSSL, SRAR…SPAV, and VEGR…ARPP. Phosphoserine is present on Ser308. Residues 415–433 show a composition bias toward low complexity; the sequence is SPTSSEVQQVPSPVSSEPP. O-linked (GalNAc...) threonine glycosylation is present at Thr441. Positions 449 to 575 are sufficient for dimerization of proICA512; that stretch reads SPLGQSQPTV…QTAHSTSPMR (127 aa). Residues Asn506 and Asn524 are each glycosylated (N-linked (GlcNAc...) asparagine). The helical transmembrane segment at 576–600 threads the bilayer; the sequence is SVLLTLVALAGVAGLLVALAVALCV. Positions 601-732 are sufficient for dimerization of proICA512; it reads RQHARQQDKE…PNTCATAQGE (132 aa). Topologically, residues 601–979 are cytoplasmic; the sequence is RQHARQQDKE…VNAILKALPQ (379 aa). The disordered stretch occupies residues 643–680; the sequence is NRAEGPPEPSRVSSVSSQFSDAAQASPSSHSSTPSWCE. Positions 652-677 are enriched in low complexity; that stretch reads SRVSSVSSQFSDAAQASPSSHSSTPS. The Tyrosine-protein phosphatase domain maps to 709 to 969; sequence LAKEWQALCA…EFALTAVAEE (261 aa). Residue Lys754 forms a Glycyl lysine isopeptide (Lys-Gly) (interchain with G-Cter in SUMO) linkage.

It belongs to the protein-tyrosine phosphatase family. Receptor class 8 subfamily. As to quaternary structure, homodimer; shown for the unprocessed protein (proICA512) in the endoplasmic reticulum and resolved during protein maturation as ICA512-TMF seems to be predominantly monomeric in secretory granules; however, ICA512-CCF interacts with ICA512-TMF disrupting the ICA512-TMF:SNTB2 complex. The isolated lumenal RESP18 homology domain has been shown to form disulfide-linked homooligomers. Interacts (via cytoplasmic domain) with phosphorylated SNTB2; this protects PTPRN against cleavage by CAPN1 to produce ICA512-CCF. Dephosphorylation of SNTB2 upon insulin stimulation disrupts the interaction and results in PTPRN cleavage. Interacts with SNX19. ICA512-CCF interacts with PIAS4; in the nucleus. Interacts with STAT5B (phosphorylated); down-regulated by ICA512-CCF sumoylation; ICA512-CCF prevents STAT5B dephosphorylation; ICA512-CCF mediates interaction of STAT5B with PIAS4. Interacts (via RESP18 homology domain) with insulin and proinsulin. Interacts with PTPRN2, PTPRA and PTPRE. In terms of processing, N-glycosylated. O-glycosylated with core 1 or possibly core 8 glycans. Post-translationally, subject to proteolytic cleavage at multiple sites. Subject to cleavage on a pair of basic residues. On exocytosis of secretory granules in pancreatic beta-cells ICA512-TMF is transiently inserted in the plasma-membrane and cleaved by mu-type calpain CPN1 to yield ICA512-CCF. In terms of processing, sumoylated at two sites including Lys-754. Sumoylation decreases interaction with STAT5. In terms of tissue distribution, expression is restricted to neuroendocrine cells. Found in pancreas, brain and pituitary.

The protein localises to the membrane. It is found in the cytoplasmic vesicle. It localises to the secretory vesicle membrane. The protein resides in the perikaryon. Its subcellular location is the cell projection. The protein localises to the axon. It is found in the synapse. It localises to the cell membrane. The protein resides in the endosome. Its subcellular location is the nucleus. Its function is as follows. Plays a role in vesicle-mediated secretory processes. Required for normal accumulation of secretory vesicles in hippocampus, pituitary and pancreatic islets. Required for the accumulation of normal levels of insulin-containing vesicles and preventing their degradation. Plays a role in insulin secretion in response to glucose stimuli. Required for normal accumulation of the neurotransmitters norepinephrine, dopamine and serotonin in the brain. In females, but not in males, required for normal accumulation and secretion of pituitary hormones, such as luteinizing hormone (LH) and follicle-stimulating hormone (FSH). Required to maintain normal levels of renin expression and renin release. Seems to lack intrinsic enzyme activity. May regulate catalytic active protein-tyrosine phosphatases such as PTPRA through dimerization. In terms of biological role, ICA512-TMF regulates dynamics and exocytosis of insulin secretory granules (SGs); binding of ICA512-TMF to SNTB2/beta-2-syntrophin is proposed to restrain SGs mobility and exocytosis by tethering them to the actin cytoskeleton depending on UTRN; the function is inhibited by cytoplasmic ICA512-CFF dimerizing with ICA512-TMF and displacing SNTB2. Functionally, ICA512-CCF translocated to the nucleus promotes expression of insulin and other granule-related genes; the function implicates binding to and regulating activity of STAT5B probably by preventing its dephosphorylation and potentially by inducing its sumoylation by recruiting PIAS4. Enhances pancreatic beta-cell proliferation by converging with signaling by STAT5B and STAT3. ICA512-CCF located in the cytoplasm regulates dynamics and exocytosis of insulin secretory granules (SGs) by dimerizing with ICA512-TMF and displacing SNTB2 thus enhancing SGs mobility and exocytosis. This is Receptor-type tyrosine-protein phosphatase-like N (PTPRN) from Homo sapiens (Human).